Here is a 326-residue protein sequence, read N- to C-terminus: L-lactate dehydrogenase (326 aa).

NAD(+)-binding positions include Val26, Asp47, Lys52, Tyr78, and 92 to 93; that span reads GA. Substrate is bound by residues Gln95 and Arg101. NAD(+) is bound by residues Thr114, 131 to 133, and Ser156; that span reads ASN. Substrate is bound at residue 133–136; that stretch reads NPVD. A substrate-binding site is contributed by 161–164; sequence DTAR. Residues Arg166 and His181 each coordinate beta-D-fructose 1,6-bisphosphate. The Proton acceptor role is filled by His188. Tyr233 is subject to Phosphotyrosine. Position 242 (Thr242) interacts with substrate.

Belongs to the LDH/MDH superfamily. LDH family. As to quaternary structure, homotetramer.

The protein resides in the cytoplasm. It catalyses the reaction (S)-lactate + NAD(+) = pyruvate + NADH + H(+). Its pathway is fermentation; pyruvate fermentation to lactate; (S)-lactate from pyruvate: step 1/1. Its activity is regulated as follows. Allosterically activated by fructose 1,6-bisphosphate (FBP). Catalyzes the conversion of lactate to pyruvate. The sequence is that of L-lactate dehydrogenase from Corynebacterium jeikeium (strain K411).